Here is a 168-residue protein sequence, read N- to C-terminus: RNA pyrophosphohydrolase (168 aa).

One can recognise a Nudix hydrolase domain in the interval 8–159 (PYRTCVGVML…KRPVYERVVK (152 aa)). The short motif at 47-68 (GGVDPGEDTWKAAKRELYEETS) is the Nudix box element.

Belongs to the Nudix hydrolase family. RppH subfamily. It depends on a divalent metal cation as a cofactor.

Accelerates the degradation of transcripts by removing pyrophosphate from the 5'-end of triphosphorylated RNA, leading to a more labile monophosphorylated state that can stimulate subsequent ribonuclease cleavage. This is RNA pyrophosphohydrolase from Rhodopseudomonas palustris (strain ATCC BAA-98 / CGA009).